Reading from the N-terminus, the 207-residue chain is FMN-dependent NADH:quinone oxidoreductase 2 (207 aa).

Residues serine 9, 15 to 17 (SAS), and 97 to 100 (MWNF) each bind FMN.

Belongs to the azoreductase type 1 family. Homodimer. The cofactor is FMN.

The catalysed reaction is 2 a quinone + NADH + H(+) = 2 a 1,4-benzosemiquinone + NAD(+). It catalyses the reaction N,N-dimethyl-1,4-phenylenediamine + anthranilate + 2 NAD(+) = 2-(4-dimethylaminophenyl)diazenylbenzoate + 2 NADH + 2 H(+). Functionally, quinone reductase that provides resistance to thiol-specific stress caused by electrophilic quinones. Also exhibits azoreductase activity. Catalyzes the reductive cleavage of the azo bond in aromatic azo compounds to the corresponding amines. This is FMN-dependent NADH:quinone oxidoreductase 2 from Burkholderia lata (strain ATCC 17760 / DSM 23089 / LMG 22485 / NCIMB 9086 / R18194 / 383).